Consider the following 138-residue polypeptide: NADPH-dependent 7-cyano-7-deazaguanine reductase (138 aa).

C53 (thioimide intermediate) is an active-site residue. The active-site Proton donor is the D60. Residues 75-77 (VEL) and 94-95 (HE) each bind substrate.

It belongs to the GTP cyclohydrolase I family. QueF type 1 subfamily.

It localises to the cytoplasm. It catalyses the reaction 7-aminomethyl-7-carbaguanine + 2 NADP(+) = 7-cyano-7-deazaguanine + 2 NADPH + 3 H(+). It functions in the pathway tRNA modification; tRNA-queuosine biosynthesis. Catalyzes the NADPH-dependent reduction of 7-cyano-7-deazaguanine (preQ0) to 7-aminomethyl-7-deazaguanine (preQ1). In Gloeothece citriformis (strain PCC 7424) (Cyanothece sp. (strain PCC 7424)), this protein is NADPH-dependent 7-cyano-7-deazaguanine reductase.